Reading from the N-terminus, the 633-residue chain is Threonine--tRNA ligase (633 aa).

Residues 1–61 enclose the TGS domain; the sequence is MINIYFNNNL…TENCTFEVIT (61 aa). Residues 242–533 are catalytic; it reads DHRKIGKELE…LIEHHSGKFP (292 aa). Cysteine 333, histidine 384, and histidine 510 together coordinate Zn(2+).

It belongs to the class-II aminoacyl-tRNA synthetase family. As to quaternary structure, homodimer. Zn(2+) serves as cofactor.

It localises to the cytoplasm. The enzyme catalyses tRNA(Thr) + L-threonine + ATP = L-threonyl-tRNA(Thr) + AMP + diphosphate + H(+). Its function is as follows. Catalyzes the attachment of threonine to tRNA(Thr) in a two-step reaction: L-threonine is first activated by ATP to form Thr-AMP and then transferred to the acceptor end of tRNA(Thr). Also edits incorrectly charged L-seryl-tRNA(Thr). This is Threonine--tRNA ligase from Ehrlichia canis (strain Jake).